A 1276-amino-acid chain; its full sequence is cGMP-specific 3',5'-cyclic phosphodiesterase (1276 aa).

3 disordered regions span residues 1-76, 91-185, and 241-260; these read MHEL…TAAG, NQVK…QQDV, and ASPT…SASS. Composition is skewed to low complexity over residues 12–47 and 57–76; these read SSSS…SSAS and TSTA…TAAG. Over residues 109-124 the composition is skewed to pro residues; sequence APYPPVPAAKPKPTPT. The span at 129-140 shows a compositional bias: basic and acidic residues; that stretch reads SKFKSTSREVDV. A compositionally biased stretch (polar residues) spans 147–166; sequence ARSSTISPGVSIHTQTIQQE. 2 stretches are compositionally biased toward low complexity: residues 167–180 and 249–260; these read SSSA…SSSS and SPRSLSNSSASS. GAF domains are found at residues 290–442 and 474–658; these read DIDV…GIGI and NLEC…GLGI. The 432-residue stretch at 688 to 1119 folds into the PDEase domain; the sequence is SQDQTEKLTQ…RNWQDLAEKV (432 aa). H764 functions as the Proton donor in the catalytic mechanism. H768, H804, D805, and D1023 together coordinate a divalent metal cation. Disordered regions lie at residues 1162–1193 and 1205–1276; these read AQHG…TGAL and LYNS…CSLL. 2 stretches are compositionally biased toward basic and acidic residues: residues 1171 to 1180 and 1221 to 1233; these read DDSHTPEHQR and LESH…DDKS. A compositionally biased stretch (low complexity) spans 1248–1263; that stretch reads GRMSASSSTSSAGTVV. Residues 1266–1276 are compositionally biased toward basic residues; that stretch reads SKKRSKLCSLL. At C1273 the chain carries Cysteine methyl ester. The S-farnesyl cysteine moiety is linked to residue C1273. Positions 1274–1276 are cleaved as a propeptide — removed in mature form; the sequence is SLL.

Belongs to the cyclic nucleotide phosphodiesterase family. In terms of assembly, interacts with PrBP. The cofactor is a divalent metal cation.

It localises to the cell membrane. The catalysed reaction is 3',5'-cyclic GMP + H2O = GMP + H(+). Its function is as follows. Has a role regulating cGMP transport in Malpighian tubule principal cells. The polypeptide is cGMP-specific 3',5'-cyclic phosphodiesterase (Drosophila persimilis (Fruit fly)).